The chain runs to 56 residues: Large ribosomal subunit protein bL32 (56 aa).

Positions 1–40 are disordered; that stretch reads MAVQQNKKSRSKRGMRRSHDSLGTAQLSVDATSGELHRRH. Positions 7 to 16 are enriched in basic residues; the sequence is KKSRSKRGMR. Over residues 21 to 31 the composition is skewed to polar residues; that stretch reads SLGTAQLSVDA.

Belongs to the bacterial ribosomal protein bL32 family.

In Shewanella halifaxensis (strain HAW-EB4), this protein is Large ribosomal subunit protein bL32.